The chain runs to 269 residues: MAAEGEAKKDSASNPPGGGGGGGGGEEEEDSSLAVGEAAVGVGEAGGGGGGGEKADREEEEGKEDVEEGGVCKDLVLVEDAVPVEDPEEAAATAALQEEMKALVESVPVGAGAAFTAMQLQELEQQSRVYQYMAARVPVPTHLVFPIWKSVTGASSEGAQKYPTLMGLATLCLDFGKNPEPEPGRCRRTDGKKWRCWRNAIANEKYCERHMHRGRKRPVQLVVEDDEPDSTSGSKPASGKATEGGKKTDDKSSSSKKLAVAAPAAVEST.

Residues 1 to 11 (MAAEGEAKKDS) show a composition bias toward basic and acidic residues. Residues 1–71 (MAAEGEAKKD…GKEDVEEGGV (71 aa)) are disordered. Residues 43–52 (GEAGGGGGGG) show a composition bias toward gly residues. The segment covering 58–68 (EEEEGKEDVEE) has biased composition (acidic residues). Positions 114-149 (AFTAMQLQELEQQSRVYQYMAARVPVPTHLVFPIWK) constitute a QLQ domain. Residues 180 to 224 (EPEPGRCRRTDGKKWRCWRNAIANEKYCERHMHRGRKRPVQLVVE) form the WRC domain. 2 short sequence motifs (bipartite nuclear localization signal) span residues 185-195 (RCRRTDGKKWR) and 213-217 (RGRKR). The disordered stretch occupies residues 212-269 (HRGRKRPVQLVVEDDEPDSTSGSKPASGKATEGGKKTDDKSSSSKKLAVAAPAAVEST). Residues 243–253 (EGGKKTDDKSS) are compositionally biased toward basic and acidic residues. Low complexity predominate over residues 255–269 (SKKLAVAAPAAVEST).

It belongs to the GRF family.

The protein localises to the nucleus. In terms of biological role, transcription activator that plays a regulatory role in gibberellin-induced stem elongation. This Oryza sativa subsp. japonica (Rice) protein is Growth-regulating factor 11 (GRF11).